The chain runs to 98 residues: Ig heavy chain V region 6.96 (98 aa).

The Ig-like domain maps to 1–98 (EVQLVESGGG…EDTAMYYCAR (98 aa)).

This is Ig heavy chain V region 6.96 from Mus musculus (Mouse).